A 358-amino-acid polypeptide reads, in one-letter code: Bi-functional coumaroyl CoA and feruloyl CoA ortho-hydroxylase F6H2-1-1 (358 aa).

Positions 207-308 (GSRRININYY…RISVPVFVNP (102 aa)) constitute a Fe2OG dioxygenase domain. Tyrosine 216 contributes to the 2-oxoglutarate binding site. The Fe cation site is built by histidine 231, aspartate 233, and histidine 289. Residues arginine 299 and serine 301 each contribute to the 2-oxoglutarate site.

The protein belongs to the iron/ascorbate-dependent oxidoreductase family. L-ascorbate is required as a cofactor. The cofactor is Fe(2+). As to expression, mostly expressed in underground stems and stems, and, at low levels, in tubers, leaves and petioles.

It carries out the reaction (E)-4-coumaroyl-CoA + 2-oxoglutarate + O2 = (E)-2,4-dihydroxycinnamoyl-CoA + succinate + CO2. It catalyses the reaction (E)-feruloyl-CoA + 2-oxoglutarate + O2 = (E)-6-hydroxyferuloyl-CoA + succinate + CO2. Its pathway is phenylpropanoid metabolism. In terms of biological role, 2-oxoglutarate (OG)- and Fe(II)-dependent dioxygenase (2OGD) involved in scopoletin and umbelliferone biosynthesis. Converts feruloyl CoA into 6'-hydroxyferuloyl CoA, and p-coumaroyl CoA into 2,4-dihydroxycinnamoyl-CoA, but has no activity with caffeoyl-CoA. The polypeptide is Bi-functional coumaroyl CoA and feruloyl CoA ortho-hydroxylase F6H2-1-1 (Ipomoea batatas (Sweet potato)).